A 506-amino-acid chain; its full sequence is Galactose/methyl galactoside import ATP-binding protein MglA (506 aa).

ABC transporter domains are found at residues 14-249 (LEMS…VGRS) and 264-506 (VILE…SLHL). Residue 46–53 (GENGAGKS) participates in ATP binding.

It belongs to the ABC transporter superfamily. Galactose/methyl galactoside importer (TC 3.A.1.2.3) family. In terms of assembly, the complex is composed of one ATP-binding protein (MglA), two transmembrane proteins (MglC) and a solute-binding protein (MglB).

Its subcellular location is the cell inner membrane. The catalysed reaction is D-galactose(out) + ATP + H2O = D-galactose(in) + ADP + phosphate + H(+). It carries out the reaction methyl beta-D-galactoside(out) + ATP + H2O = methyl beta-D-galactoside(in) + ADP + phosphate + H(+). Part of the ABC transporter complex MglABC involved in galactose/methyl galactoside import. Responsible for energy coupling to the transport system. This chain is Galactose/methyl galactoside import ATP-binding protein MglA, found in Yersinia pestis bv. Antiqua (strain Antiqua).